Here is a 371-residue protein sequence, read N- to C-terminus: Dual-specificity RNA methyltransferase RlmN (371 aa).

Catalysis depends on E92, which acts as the Proton acceptor. Positions 98–337 (EADRATLCVS…VTVRKTRGDD (240 aa)) constitute a Radical SAM core domain. A disulfide bond links C105 and C342. 3 residues coordinate [4Fe-4S] cluster: C112, C116, and C119. S-adenosyl-L-methionine-binding positions include 166 to 167 (GE), S198, 220 to 222 (SLH), and N299. C342 (S-methylcysteine intermediate) is an active-site residue.

This sequence belongs to the radical SAM superfamily. RlmN family. The cofactor is [4Fe-4S] cluster.

Its subcellular location is the cytoplasm. The catalysed reaction is adenosine(2503) in 23S rRNA + 2 reduced [2Fe-2S]-[ferredoxin] + 2 S-adenosyl-L-methionine = 2-methyladenosine(2503) in 23S rRNA + 5'-deoxyadenosine + L-methionine + 2 oxidized [2Fe-2S]-[ferredoxin] + S-adenosyl-L-homocysteine. It catalyses the reaction adenosine(37) in tRNA + 2 reduced [2Fe-2S]-[ferredoxin] + 2 S-adenosyl-L-methionine = 2-methyladenosine(37) in tRNA + 5'-deoxyadenosine + L-methionine + 2 oxidized [2Fe-2S]-[ferredoxin] + S-adenosyl-L-homocysteine. In terms of biological role, specifically methylates position 2 of adenine 2503 in 23S rRNA and position 2 of adenine 37 in tRNAs. m2A2503 modification seems to play a crucial role in the proofreading step occurring at the peptidyl transferase center and thus would serve to optimize ribosomal fidelity. This is Dual-specificity RNA methyltransferase RlmN from Actinobacillus succinogenes (strain ATCC 55618 / DSM 22257 / CCUG 43843 / 130Z).